The primary structure comprises 604 residues: Protein glass (604 aa).

Disordered regions lie at residues 111–139 (ISTT…HGYW), 199–237 (NSHN…GGNN), 359–400 (LPPL…SPTS), and 414–434 (EDEE…GGEM). Composition is skewed to low complexity over residues 117–126 (ASSGNGSSNN) and 200–237 (SHNH…GGNN). Positions 414-427 (EDEEDSNEDLDGDE) are enriched in acidic residues. C2H2-type zinc fingers lie at residues 437–459 (NLCR…LRTH), 465–487 (YRCP…VRTH), 493–515 (FRCP…MRTH), 521–543 (YRCS…LRIH), and 549–571 (YQCK…MRVH). The interval 566–604 (RHMRVHGNNNSSNGSNGATGVGGESSTGSGVGGGNSLLT) is disordered. Residues 572–581 (GNNNSSNGSN) are compositionally biased toward low complexity. Residues 582 to 604 (GATGVGGESSTGSGVGGGNSLLT) are compositionally biased toward gly residues.

The protein resides in the nucleus. In terms of biological role, transcription factor required for gene expression specific to photoreceptor cells. This Drosophila melanogaster (Fruit fly) protein is Protein glass (gl).